The following is a 318-amino-acid chain: Retinol dehydrogenase 5 (318 aa).

The helical transmembrane segment at 1-21 (MWLPLLLGALLWAVLWLLRDR) threads the bilayer. The Lumenal portion of the chain corresponds to 22–288 (QSLPASNAFV…TRYSPGWDAK (267 aa)). 32–56 (FITGCDSGFGRLLALQLDQRGFRVL) is a binding site for NADP(+). Residue Asn160 is glycosylated (N-linked (GlcNAc...) asparagine). A substrate-binding site is contributed by Ser163. Tyr175 serves as the catalytic Proton acceptor. The chain crosses the membrane as a helical span at residues 289-309 (LLWLPASYLPASLVDAVLTWV). At 310–318 (LPKPAQAVY) the chain is on the cytoplasmic side.

The protein belongs to the short-chain dehydrogenases/reductases (SDR) family. In terms of assembly, homodimer. Widely expressed. In the eye, abundant in the retinal pigment epithelium.

It localises to the endoplasmic reticulum membrane. It catalyses the reaction 11-cis-retinol + NAD(+) = 11-cis-retinal + NADH + H(+). The enzyme catalyses 9-cis-retinol + NAD(+) = 9-cis-retinal + NADH + H(+). The catalysed reaction is 13-cis-retinol + NAD(+) = 13-cis-retinal + NADH + H(+). It carries out the reaction androsterone + NAD(+) = 5alpha-androstan-3,17-dione + NADH + H(+). It catalyses the reaction 5alpha-androstane-3alpha,17beta-diol + NAD(+) = 17beta-hydroxy-5alpha-androstan-3-one + NADH + H(+). It participates in cofactor metabolism; retinol metabolism. With respect to regulation, inhibited by 9-cis-, 13-cis- and all-trans-retinoic acids, with the most potent inhibitor being 13-cis-retinoic acid. Weakly inhibited by oleic acid. Functionally, catalyzes the oxidation of cis-isomers of retinol, including 11-cis-, 9-cis-, and 13-cis-retinol in an NAD-dependent manner. Has no activity towards all-trans retinal. Plays a significant role in 11-cis retinol oxidation in the retinal pigment epithelium cells (RPE). Also recognizes steroids (androsterone, androstanediol) as its substrates. The chain is Retinol dehydrogenase 5 from Homo sapiens (Human).